The following is a 154-amino-acid chain: Fimbrial protein (154 aa).

The propeptide at 1-6 (MKAQKG) is leader sequence. Phenylalanine 7 is modified (N-methylphenylalanine). The chain crosses the membrane as a helical span at residues 7-27 (FTLIELMIVVAIIGILAAIAI). Cysteine 133 and cysteine 151 form a disulfide bridge. O-linked (FucNAc...) serine glycosylation is present at serine 154.

The protein belongs to the N-Me-Phe pilin family. In terms of assembly, the pili are polar flexible filaments of about 5.4 nanometers diameter and 2.5 micrometers average length; they consist of only a single polypeptide chain arranged in a helical configuration of five subunits per turn in the assembled pilus. Post-translationally, O-glycosylated; glycan consists of 5NbetaOHC47NFmPse(alpha2-4)Xyl(beta1-3)FucNAc in beta1-O linkage to Ser.

Its subcellular location is the fimbrium. It localises to the membrane. This chain is Fimbrial protein (pilA), found in Pseudomonas aeruginosa.